The primary structure comprises 335 residues: Cell division protein ZipA (335 aa).

Residues 1-6 are Periplasmic-facing; sequence MENLQL. Residues 7 to 27 form a helical membrane-spanning segment; the sequence is VLFVLGAVAIIAVLVHGFWSI. Residues 28–335 are Cytoplasmic-facing; sequence RRQQPKSLKE…SYLQRIRAQM (308 aa). Disordered stretches follow at residues 37 to 128 and 163 to 185; these read ESPM…NEEV and RPAP…VSVE. Over residues 170–185 the composition is skewed to low complexity; the sequence is APQSVAPASVEPVSVE.

This sequence belongs to the ZipA family. In terms of assembly, interacts with FtsZ via their C-terminal domains.

The protein resides in the cell inner membrane. Its function is as follows. Essential cell division protein that stabilizes the FtsZ protofilaments by cross-linking them and that serves as a cytoplasmic membrane anchor for the Z ring. Also required for the recruitment to the septal ring of downstream cell division proteins. The chain is Cell division protein ZipA from Shewanella loihica (strain ATCC BAA-1088 / PV-4).